A 1363-amino-acid polypeptide reads, in one-letter code: DNA-directed RNA polymerase subunit beta (1363 aa).

The protein belongs to the RNA polymerase beta chain family. The RNAP catalytic core consists of 2 alpha, 1 beta, 1 beta' and 1 omega subunit. When a sigma factor is associated with the core the holoenzyme is formed, which can initiate transcription.

It carries out the reaction RNA(n) + a ribonucleoside 5'-triphosphate = RNA(n+1) + diphosphate. In terms of biological role, DNA-dependent RNA polymerase catalyzes the transcription of DNA into RNA using the four ribonucleoside triphosphates as substrates. The chain is DNA-directed RNA polymerase subunit beta from Syntrophus aciditrophicus (strain SB).